Consider the following 250-residue polypeptide: Nuclear transcription factor Y subunit C-4 (250 aa).

The disordered stretch occupies residues 219–250; that stretch reads GIAYGGQQGHPGYLWQDPQEQQEEPPAEQQSD. Acidic residues predominate over residues 238-250; that stretch reads EQQEEPPAEQQSD.

The protein belongs to the NFYC/HAP5 subunit family. Heterotrimeric transcription factor composed of three components, NF-YA, NF-YB and NF-YC. NF-YB and NF-YC must interact and dimerize for NF-YA association and DNA binding. Interacts with NFYB2. Interacts with NFYB8, NFYB10 and HD5/NFYB11.

Its subcellular location is the nucleus. The protein resides in the cytoplasm. In terms of biological role, probable transcription factor involved in the regulation of flowering time under long day (LD) conditions. Functions as a repressor of flowering, independently of HD1 and GHD7. Controls flowering time by negatively regulating the expression of EHD1 and HD3A. Component of the NF-Y/HAP transcription factor complex. This chain is Nuclear transcription factor Y subunit C-4, found in Oryza sativa subsp. japonica (Rice).